The primary structure comprises 90 residues: RNA-binding protein Hfq (90 aa).

The 60-residue stretch at 9–68 (EPFLNTLRKEKVPVSIYLVNGIKLQGQIESFDQFVVLLRNNVNQMVYKHAISTIVPARRV) folds into the Sm domain.

It belongs to the Hfq family. In terms of assembly, homohexamer.

RNA chaperone that binds small regulatory RNA (sRNAs) and mRNAs to facilitate mRNA translational regulation in response to envelope stress, environmental stress and changes in metabolite concentrations. Also binds with high specificity to tRNAs. This is RNA-binding protein Hfq from Halorhodospira halophila (strain DSM 244 / SL1) (Ectothiorhodospira halophila (strain DSM 244 / SL1)).